A 108-amino-acid chain; its full sequence is Large ribosomal subunit protein bL21 (108 aa).

It belongs to the bacterial ribosomal protein bL21 family. Part of the 50S ribosomal subunit. Contacts protein L20.

This protein binds to 23S rRNA in the presence of protein L20. This chain is Large ribosomal subunit protein bL21, found in Buchnera aphidicola subsp. Acyrthosiphon pisum (strain 5A).